The following is a 329-amino-acid chain: MAP kinase-activated protein kinase 2 (329 aa).

ATP is bound by residues 1-7 (LGINGKV) and K22. A Protein kinase domain is found at 1 to 254 (LGINGKVLRI…ITEFMNHPWI (254 aa)). A staurosporine-binding site is contributed by 68–70 (ECL). D115 (proton acceptor) is an active-site residue. At T151 the chain carries Phosphothreonine; by MAPK14. A Phosphoserine; by MAPK14 modification is found at S201. S257 is modified (phosphoserine; by autocatalysis). An autoinhibitory helix region spans residues 257–293 (STKVPQTPLHTSRVLKEDKERWEDVKEEMTSALATMR). A Phosphothreonine; by MAPK14 modification is found at T263. A Glycyl lysine isopeptide (Lys-Gly) (interchain with G-Cter in SUMO) cross-link involves residue K282. The Nuclear export signal (NES) signature appears at 285-294 (MTSALATMRV). Residues 295–319 (DYEQIKIKKIEDASNPLLLKRRKKA) form a p38 MAPK-binding site region. 2 consecutive short sequence motifs (bipartite nuclear localization signal) follow at residues 300–303 (KIKK) and 314–318 (KRRKK).

It belongs to the protein kinase superfamily. CAMK Ser/Thr protein kinase family. Heterodimer with p38-alpha/MAPK14; this heterodimer forms a stable complex: molecules are positioned 'face to face' so that the ATP-binding sites of both kinases are at the heterodimer interface. Interacts with PHC2. Interacts with HSF1. Post-translationally, sumoylation inhibits the protein kinase activity. Phosphorylated and activated by MAP kinase p38-alpha/MAPK14 at Thr-151, Ser-201 and Thr-263.

It localises to the cytoplasm. The protein resides in the nucleus. It carries out the reaction L-seryl-[protein] + ATP = O-phospho-L-seryl-[protein] + ADP + H(+). The catalysed reaction is L-threonyl-[protein] + ATP = O-phospho-L-threonyl-[protein] + ADP + H(+). With respect to regulation, activated following phosphorylation by p38-alpha/MAPK14 following various stresses. Inhibited following sumoylation. Specifically inhibited by pyrrolopyridine inhibitors. Its function is as follows. Stress-activated serine/threonine-protein kinase involved in cytokine production, endocytosis, reorganization of the cytoskeleton, cell migration, cell cycle control, chromatin remodeling, DNA damage response and transcriptional regulation. Following stress, it is phosphorylated and activated by MAP kinase p38-alpha/MAPK14, leading to phosphorylation of substrates. Phosphorylates serine in the peptide sequence, Hyd-X-R-X(2)-S, where Hyd is a large hydrophobic residue. Phosphorylates ALOX5, CDC25B, CDC25C, CEP131, ELAVL1, HNRNPA0, HSP27/HSPB1, KRT18, KRT20, LIMK1, LSP1, PABPC1, PARN, PDE4A, RCSD1, RPS6KA3, TAB3 and TTP/ZFP36. Phosphorylates HSF1; leading to the interaction with HSP90 proteins and inhibiting HSF1 homotrimerization, DNA-binding and transactivation activities. Mediates phosphorylation of HSP27/HSPB1 in response to stress, leading to the dissociation of HSP27/HSPB1 from large small heat-shock protein (sHsps) oligomers and impairment of their chaperone activities and ability to protect against oxidative stress effectively. Involved in inflammatory response by regulating tumor necrosis factor (TNF) and IL6 production post-transcriptionally: acts by phosphorylating AU-rich elements (AREs)-binding proteins ELAVL1, HNRNPA0, PABPC1 and TTP/ZFP36, leading to regulation of the stability and translation of TNF and IL6 mRNAs. Phosphorylation of TTP/ZFP36, a major post-transcriptional regulator of TNF, promotes its binding to 14-3-3 proteins and reduces its ARE mRNA affinity, leading to inhibition of dependent degradation of ARE-containing transcripts. Phosphorylates CEP131 in response to cellular stress following ultraviolet irradiation which promotes binding of CEP131 to 14-3-3 proteins and inhibits formation of novel centriolar satellites. Also involved in late G2/M checkpoint following DNA damage through a process of post-transcriptional mRNA stabilization: following DNA damage, relocalizes from nucleus to cytoplasm and phosphorylates HNRNPA0 and PARN, leading to stabilization of GADD45A mRNA. Involved in toll-like receptor signaling pathway (TLR) in dendritic cells: required for acute TLR-induced macropinocytosis by phosphorylating and activating RPS6KA3. The polypeptide is MAP kinase-activated protein kinase 2 (MAPKAPK2) (Cricetulus longicaudatus (Long-tailed dwarf hamster)).